Consider the following 279-residue polypeptide: Urease accessory protein UreD (279 aa).

This sequence belongs to the UreD family. UreD, UreF and UreG form a complex that acts as a GTP-hydrolysis-dependent molecular chaperone, activating the urease apoprotein by helping to assemble the nickel containing metallocenter of UreC. The UreE protein probably delivers the nickel.

The protein localises to the cytoplasm. Its function is as follows. Required for maturation of urease via the functional incorporation of the urease nickel metallocenter. The sequence is that of Urease accessory protein UreD from Streptococcus thermophilus (strain CNRZ 1066).